We begin with the raw amino-acid sequence, 33 residues long: GDCLPHLKLCKENKDCCSKKCKRRGTNIEKRCR.

Cystine bridges form between Cys3-Cys17, Cys10-Cys21, and Cys16-Cys32. Positions 22-24 are essential for stimulation of [3H]ryanodine binding to RYR; it reads KRR.

Belongs to the scorpion calcin family. In terms of processing, the non-natural D-maurocalcin (a chiral analog of maurocalcin composed of D-amino acids) completely loses the ability to stimulate [3H]ryanodine binding and calcium release. Its protease resistance, combined with its efficient cell penetration at concentrations devoid of cell toxicity, suggests that it should be an excellent vector for in vivo applications. In terms of tissue distribution, expressed by the venom gland.

The protein localises to the secreted. This toxin stabilizes ryanodine receptor 1 (RyR1) opening in a long-lasting subconductance state (48%-60% of the full conductance state). Furthermore, it triggers calcium release from sarcoplasmic vesicles (6.6 nM are enough to induce a sharp release, and 60% of the total calcium is released after toxin (100 nM) addition) probably by acting as a cell-penetrating peptide (CPP). In addition, it has been shown to dose-dependently stimulate ryanodine binding to RyR1 (EC(50)=12.5-26.4 nM). It also augments the bell-shaped calcium-[3H]ryanodine binding curve that is maximal at about 10 uM calcium concentration. It binds a different site as ryanodine. It acts synergistically with caffeine. In vivo, intracerebroventricular injection into mice causes death. This is Maurocalcin from Scorpio palmatus (Israeli golden scorpion).